Here is a 209-residue protein sequence, read N- to C-terminus: Large ribosomal subunit protein uL3 (209 aa).

Residues 132–153 are disordered; sequence ATHGNSLSHRVPGSIGQNQTPG. An N5-methylglutamine modification is found at Gln150.

The protein belongs to the universal ribosomal protein uL3 family. Part of the 50S ribosomal subunit. Forms a cluster with proteins L14 and L19. Methylated by PrmB.

One of the primary rRNA binding proteins, it binds directly near the 3'-end of the 23S rRNA, where it nucleates assembly of the 50S subunit. The protein is Large ribosomal subunit protein uL3 of Enterobacter sp. (strain 638).